A 316-amino-acid polypeptide reads, in one-letter code: Apolipoprotein E (316 aa).

The N-terminal stretch at M1 to A18 is a signal peptide. 8 tandem repeats follow at residues A79–G100, P101–G122, S123–G144, Q145–L166, R167–E188, R189–A210, T211–H232, and G233–E254. Residues A79–E254 form an 8 X 22 AA approximate tandem repeats region. M142 carries the methionine sulfoxide modification. At S146 the chain carries Phosphoserine; by FAM20C. An LDL and other lipoprotein receptors binding region spans residues H157–R167. L161–R164 provides a ligand contact to heparin. Residues A209–M289 are lipid-binding and lipoprotein association. T211 carries an O-linked (GalNAc...) threonine glycan. Residue R228–L235 coordinates heparin. A homooligomerization region spans residues N265–H316. Residues R277–M289 form a specificity for association with VLDL region.

Belongs to the apolipoprotein A1/A4/E family. In terms of assembly, homotetramer. May interact with ABCA1; functionally associated with ABCA1 in the biogenesis of HDLs. May interact with APP/A4 amyloid-beta peptide; the interaction is extremely stable in vitro but its physiological significance is unclear. May interact with MAPT. May interact with MAP2. In the cerebrospinal fluid, interacts with secreted SORL1. Interacts with PMEL; this allows the loading of PMEL luminal fragment on ILVs to induce fibril nucleation. In terms of processing, APOE exists as multiple glycosylated and sialylated glycoforms within cells and in plasma. The extent of glycosylation and sialylation are tissue and context specific. Post-translationally, glycated in plasma VLDL. Phosphorylated by FAM20C in the extracellular medium.

The protein resides in the secreted. Its subcellular location is the extracellular space. The protein localises to the extracellular matrix. It is found in the extracellular vesicle. It localises to the endosome. The protein resides in the multivesicular body. In terms of biological role, APOE is an apolipoprotein, a protein associating with lipid particles, that mainly functions in lipoprotein-mediated lipid transport between organs via the plasma and interstitial fluids. APOE is a core component of plasma lipoproteins and is involved in their production, conversion and clearance. Apolipoproteins are amphipathic molecules that interact both with lipids of the lipoprotein particle core and the aqueous environment of the plasma. As such, APOE associates with chylomicrons, chylomicron remnants, very low density lipoproteins (VLDL) and intermediate density lipoproteins (IDL) but shows a preferential binding to high-density lipoproteins (HDL). It also binds a wide range of cellular receptors including the LDL receptor/LDLR and the very low-density lipoprotein receptor/VLDLR that mediate the cellular uptake of the APOE-containing lipoprotein particles. Finally, APOE also has a heparin-binding activity and binds heparan-sulfate proteoglycans on the surface of cells, a property that supports the capture and the receptor-mediated uptake of APOE-containing lipoproteins by cells. In Bos mutus grunniens (Wild yak), this protein is Apolipoprotein E (APOE).